A 318-amino-acid polypeptide reads, in one-letter code: Solute carrier family 25 member 34 (318 aa).

3 Solcar repeats span residues 18 to 111, 115 to 208, and 218 to 309; these read VSPA…ACQA, QQPG…AKAW, and DSWL…LRKL. Transmembrane regions (helical) follow at residues 21-41, 59-79, 112-134, 184-205, 220-240, and 292-315; these read AVDLVLGASACCLACVFTNPL, TYPRPYRGFVSSVTAVARADG, GLTQQPGGTVVAGAVAGALGAFV, VGAAVPRVTVGSAAQLATFTSA, WLATLAGGMISSIAVVAVMAP, and LGPHTILSMFFWDELRKLALRAQH.

This sequence belongs to the mitochondrial carrier (TC 2.A.29) family.

It localises to the mitochondrion inner membrane. It catalyses the reaction a dicarboxylate(in) + sulfate(out) = a dicarboxylate(out) + sulfate(in). In terms of biological role, putative antiporter that exchanges dicarboxylates and sulfur oxoanions across the inner membrane of mitochondria. In Rattus norvegicus (Rat), this protein is Solute carrier family 25 member 34 (Slc25a34).